The chain runs to 340 residues: Protein HP_1247 (340 aa).

Seems to interact with H.pylori HolB.

Its function is as follows. Could be the functional equivalent of DNA polymerase III delta subunit (HolA). This is Protein HP_1247 from Helicobacter pylori (strain ATCC 700392 / 26695) (Campylobacter pylori).